The sequence spans 1705 residues: Receptor-type tyrosine-protein phosphatase V (1705 aa).

The N-terminal stretch at 1 to 18 (MRPLILLAALLWLQDSLA) is a signal peptide. Residues 19–1077 (QEDVCSSLDG…QASISLVAMP (1059 aa)) are Extracellular-facing. Residues 24–44 (SSLDGSPDRQGGGPPLSVSVT) form a disordered region. Fibronectin type-III domains are found at residues 37-129 (PPLS…TAPT), 130-222 (VVRG…VPPD), 218-305 (PVPP…EWTY), 306-388 (PSYP…SIWL), 393-454 (ARPM…HYRV), 475-569 (PPQS…APPT), 565-654 (PAPP…TGWT), 655-749 (PPSA…TPNE), 744-831 (PLTP…VLSV), and 832-926 (EPGP…SAEV). N-linked (GlcNAc...) asparagine glycans are attached at residues asparagine 74, asparagine 89, asparagine 117, asparagine 174, asparagine 239, asparagine 259, asparagine 299, asparagine 345, asparagine 431, asparagine 551, asparagine 570, asparagine 620, asparagine 649, asparagine 663, and asparagine 737. N-linked (GlcNAc...) asparagine glycans are attached at residues asparagine 851, asparagine 882, asparagine 970, and asparagine 982. Residues 1078–1100 (LTVMMGTVVGCIIIVCAVLCLLC) traverse the membrane as a helical segment. Over 1101–1705 (RRGLKGPRSE…LRNRLPRARK (605 aa)) the chain is Cytoplasmic. 2 Tyrosine-protein phosphatase domains span residues 1150–1409 (FFQE…LLNK) and 1427–1695 (NFAQ…LNSA). Residues aspartate 1316, 1350 to 1356 (CSAGVGR), and glutamine 1394 contribute to the substrate site. Cysteine 1350 functions as the Phosphocysteine intermediate in the catalytic mechanism.

The protein belongs to the protein-tyrosine phosphatase family. Receptor class 3 subfamily.

The protein resides in the membrane. It catalyses the reaction O-phospho-L-tyrosyl-[protein] + H2O = L-tyrosyl-[protein] + phosphate. Protein tyrosine phosphatase that acts as a regulator of energy metabolism by mediating dephosphorylation of insulin receptor (Insr). Prevents decarboxylation of osteocalcin (Bglap and Bglap2) via an indirect mechanism: dephosphorylation of insulin receptor prevents insulin signaling-dependent decarboxylation of osteocalcin, preventing the hormone activity of osteocalcin. May play a role in the maintenance of pluripotency. The protein is Receptor-type tyrosine-protein phosphatase V (Ptprv) of Mus musculus (Mouse).